Reading from the N-terminus, the 186-residue chain is Ribosome-recycling factor (186 aa).

This sequence belongs to the RRF family.

It is found in the cytoplasm. Its function is as follows. Responsible for the release of ribosomes from messenger RNA at the termination of protein biosynthesis. May increase the efficiency of translation by recycling ribosomes from one round of translation to another. The sequence is that of Ribosome-recycling factor from Cupriavidus taiwanensis (strain DSM 17343 / BCRC 17206 / CCUG 44338 / CIP 107171 / LMG 19424 / R1) (Ralstonia taiwanensis (strain LMG 19424)).